The primary structure comprises 511 residues: Maturase K (511 aa).

This sequence belongs to the intron maturase 2 family. MatK subfamily.

It is found in the plastid. The protein resides in the chloroplast. In terms of biological role, usually encoded in the trnK tRNA gene intron. Probably assists in splicing its own and other chloroplast group II introns. This chain is Maturase K, found in Primula veris (Cowslip).